We begin with the raw amino-acid sequence, 190 residues long: Segregation and condensation protein B (190 aa).

Belongs to the ScpB family. In terms of assembly, homodimer. Homodimerization may be required to stabilize the binding of ScpA to the Smc head domains. Component of a cohesin-like complex composed of ScpA, ScpB and the Smc homodimer, in which ScpA and ScpB bind to the head domain of Smc. The presence of the three proteins is required for the association of the complex with DNA.

The protein localises to the cytoplasm. In terms of biological role, participates in chromosomal partition during cell division. May act via the formation of a condensin-like complex containing Smc and ScpA that pull DNA away from mid-cell into both cell halves. The polypeptide is Segregation and condensation protein B (Bacillus cereus (strain G9842)).